A 293-amino-acid polypeptide reads, in one-letter code: Pyridoxal 5'-phosphate synthase subunit PdxS (293 aa).

A D-ribose 5-phosphate-binding site is contributed by Asp-23. Residue Lys-80 is the Schiff-base intermediate with D-ribose 5-phosphate of the active site. Gly-152 provides a ligand contact to D-ribose 5-phosphate. Residue Arg-164 participates in D-glyceraldehyde 3-phosphate binding. Residues Gly-213 and 234 to 235 (GS) each bind D-ribose 5-phosphate.

This sequence belongs to the PdxS/SNZ family. In the presence of PdxT, forms a dodecamer of heterodimers.

The enzyme catalyses aldehydo-D-ribose 5-phosphate + D-glyceraldehyde 3-phosphate + L-glutamine = pyridoxal 5'-phosphate + L-glutamate + phosphate + 3 H2O + H(+). It functions in the pathway cofactor biosynthesis; pyridoxal 5'-phosphate biosynthesis. Functionally, catalyzes the formation of pyridoxal 5'-phosphate from ribose 5-phosphate (RBP), glyceraldehyde 3-phosphate (G3P) and ammonia. The ammonia is provided by the PdxT subunit. Can also use ribulose 5-phosphate and dihydroxyacetone phosphate as substrates, resulting from enzyme-catalyzed isomerization of RBP and G3P, respectively. This chain is Pyridoxal 5'-phosphate synthase subunit PdxS, found in Chloroflexus aurantiacus (strain ATCC 29366 / DSM 635 / J-10-fl).